Here is a 966-residue protein sequence, read N- to C-terminus: Mitogen-activated protein kinase kinase kinase 13 (966 aa).

Disordered stretches follow at residues 1 to 22, 30 to 49, and 90 to 114; these read MANF…SESK, ELTA…QQEK, and HDES…SGTE. Polar residues predominate over residues 95-113; the sequence is TAVSQGNSNTVDGESTSGT. Residues 168–409 form the Protein kinase domain; that stretch reads ISELQWLGSG…FRQTLMHLDI (242 aa). Residues 174–182 and lysine 195 contribute to the ATP site; that span reads LGSGAQGAV. The Proton acceptor role is filled by aspartate 279. Leucine-zipper regions lie at residues 433–454 and 486–507; these read VKKH…DEEL and LSAI…EQAV. 4 disordered regions span residues 534–599, 611–655, 744–834, and 846–908; these read KRKG…RGSH, AQEN…HHPR, DIPS…RRQR, and STFS…GLSD. A compositionally biased stretch (low complexity) spans 567–581; it reads SPLSGSPKMSTSSSK. The segment covering 582–594 has biased composition (basic residues); sequence SRYRSKPRHRRGN. Composition is skewed to polar residues over residues 611-629 and 785-795; these read AQEN…SQYP and RSESSLGTSHL. Residues 814-827 show a composition bias toward acidic residues; it reads DSSEEEEGEVDSEV. The segment at 815 to 828 is acidic; that stretch reads SSEEEEGEVDSEVE. Polar residues predominate over residues 846–855; the sequence is STFSSENFSV. Residues 873-887 show a composition bias toward basic and acidic residues; sequence LADKLEDRLAEKLDD.

It belongs to the protein kinase superfamily. STE Ser/Thr protein kinase family. MAP kinase kinase kinase subfamily. As to quaternary structure, homodimer; forms dimers through the leucine-zipper motif. Interacts with the C-terminus of MAPK8IP1 through the kinase catalytic domain. Binds PRDX3. Associates with the IKK complex through the kinase domain. It depends on Mg(2+) as a cofactor. Autophosphorylated on serine and threonine residues. In terms of tissue distribution, expressed in the adult brain, liver, placenta and pancreas, with expression strongest in the pancreas.

It is found in the cytoplasm. The protein localises to the membrane. The enzyme catalyses L-seryl-[protein] + ATP = O-phospho-L-seryl-[protein] + ADP + H(+). It catalyses the reaction L-threonyl-[protein] + ATP = O-phospho-L-threonyl-[protein] + ADP + H(+). Activated by autophosphorylation and homodimerization. Functionally, activates the JUN N-terminal pathway through activation of the MAP kinase kinase MAP2K7. Acts synergistically with PRDX3 to regulate the activation of NF-kappa-B in the cytosol. This activation is kinase-dependent and involves activating the IKK complex, the IKBKB-containing complex that phosphorylates inhibitors of NF-kappa-B. The chain is Mitogen-activated protein kinase kinase kinase 13 from Homo sapiens (Human).